The chain runs to 362 residues: Porin Omp2b (362 aa).

Positions 1–22 are cleaved as a signal peptide; sequence MNIKSLLLGSAAALVAASGAQA.

It belongs to the alphaproteobacteria porin family. As to quaternary structure, homotrimer.

Its subcellular location is the cell outer membrane. Forms passive diffusion pores that allow small molecular weight hydrophilic materials across the outer membrane. In Brucella melitensis biotype 1 (strain ATCC 23456 / CCUG 17765 / NCTC 10094 / 16M), this protein is Porin Omp2b (omp2b).